Here is a 273-residue protein sequence, read N- to C-terminus: Phosphate import ATP-binding protein PstB (273 aa).

The ABC transporter domain occupies 27-268 (VTVRNLNFYY…PSDRRTQDYI (242 aa)). 59 to 66 (GPSGCGKS) is a binding site for ATP.

The protein belongs to the ABC transporter superfamily. Phosphate importer (TC 3.A.1.7) family. As to quaternary structure, the complex is composed of two ATP-binding proteins (PstB), two transmembrane proteins (PstC and PstA) and a solute-binding protein (PstS).

Its subcellular location is the cell inner membrane. It catalyses the reaction phosphate(out) + ATP + H2O = ADP + 2 phosphate(in) + H(+). Functionally, part of the ABC transporter complex PstSACB involved in phosphate import. Responsible for energy coupling to the transport system. The chain is Phosphate import ATP-binding protein PstB from Bradyrhizobium diazoefficiens (strain JCM 10833 / BCRC 13528 / IAM 13628 / NBRC 14792 / USDA 110).